The sequence spans 71 residues: Large ribosomal subunit protein uL29 (71 aa).

This sequence belongs to the universal ribosomal protein uL29 family.

This chain is Large ribosomal subunit protein uL29, found in Synechococcus sp. (strain RCC307).